Reading from the N-terminus, the 114-residue chain is Nucleoid-associated protein Amet_4780 (114 aa).

Residues 23–42 form a disordered region; it reads QKMQKDMEKTQAALEEKEVE. Residues 25–42 are compositionally biased toward basic and acidic residues; the sequence is MQKDMEKTQAALEEKEVE.

It belongs to the YbaB/EbfC family. Homodimer.

The protein localises to the cytoplasm. It is found in the nucleoid. Its function is as follows. Binds to DNA and alters its conformation. May be involved in regulation of gene expression, nucleoid organization and DNA protection. The chain is Nucleoid-associated protein Amet_4780 from Alkaliphilus metalliredigens (strain QYMF).